The sequence spans 187 residues: MKVIVGLGNPGPRYAFNRHNVGFMFVDRFKEFKKCSTWQHRDRYTFSQCKDIFLVKPNTFMNLSGIAVIKCQRDFHVTTTDIIVVYDDVDLPCGRLRIKAQGGSGGHRGLQSIIDYIGTNEFVRLRIGIGPKPENIDLADYVLEDFTEEELRLIDKVLDKAVEAVDVMLNEGLSKAMSVFNSYEVVL.

Residue Tyr14 participates in tRNA binding. Residue His19 is the Proton acceptor of the active site. Positions 60 and 62 each coordinate tRNA.

This sequence belongs to the PTH family. Monomer.

The protein resides in the cytoplasm. The catalysed reaction is an N-acyl-L-alpha-aminoacyl-tRNA + H2O = an N-acyl-L-amino acid + a tRNA + H(+). Its function is as follows. Hydrolyzes ribosome-free peptidyl-tRNAs (with 1 or more amino acids incorporated), which drop off the ribosome during protein synthesis, or as a result of ribosome stalling. In terms of biological role, catalyzes the release of premature peptidyl moieties from peptidyl-tRNA molecules trapped in stalled 50S ribosomal subunits, and thus maintains levels of free tRNAs and 50S ribosomes. This chain is Peptidyl-tRNA hydrolase, found in Pseudothermotoga lettingae (strain ATCC BAA-301 / DSM 14385 / NBRC 107922 / TMO) (Thermotoga lettingae).